Reading from the N-terminus, the 248-residue chain is 2,3-bisphosphoglycerate-dependent phosphoglycerate mutase (248 aa).

Residues 8–15 (RHGESTWN), 21–22 (TG), arginine 60, 87–90 (ERHY), lysine 98, 114–115 (RR), and 183–184 (GN) contribute to the substrate site. Histidine 9 acts as the Tele-phosphohistidine intermediate in catalysis. Catalysis depends on glutamate 87, which acts as the Proton donor/acceptor.

The protein belongs to the phosphoglycerate mutase family. BPG-dependent PGAM subfamily. Homodimer.

It carries out the reaction (2R)-2-phosphoglycerate = (2R)-3-phosphoglycerate. Its pathway is carbohydrate degradation; glycolysis; pyruvate from D-glyceraldehyde 3-phosphate: step 3/5. In terms of biological role, catalyzes the interconversion of 2-phosphoglycerate and 3-phosphoglycerate. This chain is 2,3-bisphosphoglycerate-dependent phosphoglycerate mutase, found in Burkholderia vietnamiensis (strain G4 / LMG 22486) (Burkholderia cepacia (strain R1808)).